The chain runs to 372 residues: MESPAWDATKNDSLPPTLTPAVPPYVKLGLTTVYTIFYLLLFAFVYVQLWLVLHYKHKRFSYQTVFLFLCLLWASLRAVLFSFYFRNFVEANRLGAFTFWLLYCFPVCLQFFTLTLMNLYFARVIYKAKSKYLPELIKYRLPLYLAFLVISLLFLVVNLTCAILVKTDYAETKVIVSIRVAINDTLFVLCAVSLSVCLYKISKMSLAGVYLESKGSSVCQVTCIGVTVILLYTSRACYNLVVLSLSDSRYSSFDYDWYNVSDQADLKCKLGDAGYVVFGIILFIWELFPTSLVVYFFRVRNSAQDMTNPGMVPGFNPRSYFFDNPRRYDSDDDLAWNITPQSLQGSFGPDYFDWGNRNSFGSQTGSLQRDST.

Topologically, residues 1 to 32 (MESPAWDATKNDSLPPTLTPAVPPYVKLGLTT) are lumenal. Asn11 carries an N-linked (GlcNAc...) asparagine glycan. Residues 33 to 53 (VYTIFYLLLFAFVYVQLWLVL) form a helical membrane-spanning segment. The Cytoplasmic segment spans residues 54–64 (HYKHKRFSYQT). Residues 65–85 (VFLFLCLLWASLRAVLFSFYF) traverse the membrane as a helical segment. The Lumenal segment spans residues 86–93 (RNFVEANR). The chain crosses the membrane as a helical span at residues 94–114 (LGAFTFWLLYCFPVCLQFFTL). Over 115 to 144 (TLMNLYFARVIYKAKSKYLPELIKYRLPLY) the chain is Cytoplasmic. The chain crosses the membrane as a helical span at residues 145–165 (LAFLVISLLFLVVNLTCAILV). Residues 166–173 (KTDYAETK) are Lumenal-facing. Residues 174-194 (VIVSIRVAINDTLFVLCAVSL) traverse the membrane as a helical segment. Over 195–222 (SVCLYKISKMSLAGVYLESKGSSVCQVT) the chain is Cytoplasmic. Residues 223–243 (CIGVTVILLYTSRACYNLVVL) traverse the membrane as a helical segment. The Lumenal segment spans residues 244–276 (SLSDSRYSSFDYDWYNVSDQADLKCKLGDAGYV). Asn259 carries an N-linked (GlcNAc...) asparagine glycan. The helical transmembrane segment at 277–297 (VFGIILFIWELFPTSLVVYFF) threads the bilayer. The Cytoplasmic segment spans residues 298 to 372 (RVRNSAQDMT…QTGSLQRDST (75 aa)).

It belongs to the GPR137 family.

It is found in the lysosome membrane. In terms of biological role, lysosomal integral membrane protein that regulates the localization and activity of mTORC1, a signaling complex promoting cell growth in response to growth factors, energy levels, and amino acids. Interacts with Rag GTPases and increases the lysosomial localization and activity of Rag GTPases and thereby regulates mTORC1 translocation and activity in lysosome. Involved in the regulation of lysosomal morphology and autophagy. Also acts as a negative regulator of osteoclast activity. Its function is as follows. Also acts as a negative regulator of osteoclast activity. The polypeptide is Integral membrane protein GPR137B (gpr137b) (Xenopus laevis (African clawed frog)).